We begin with the raw amino-acid sequence, 454 residues long: Probable 1,4-beta-D-glucan cellobiohydrolase C (454 aa).

The signal sequence occupies residues 1 to 19; sequence MKHLASSIALTLLLPAVQA. The 36-residue stretch at 20–55 folds into the CBM1 domain; the sequence is QQTVWGQCGGQGWSGPTSCVAGAACSTLNPYYAQCI. 2 disulfide bridges follow: Cys27/Cys44 and Cys38/Cys54. Thr-rich linker regions lie at residues 59–94 and 95–454; these read TATSTTLTTTTAATTTSQTTTKPTTTGPTTSAPTVT and ASGN…NPSF. The disordered stretch occupies residues 68 to 95; it reads TTAATTTSQTTTKPTTTGPTTSAPTVTA. Residue Asp184 is part of the active site. Intrachain disulfides connect Cys185–Cys244 and Cys376–Cys423. Asp230 (proton donor) is an active-site residue. Asp409 functions as the Nucleophile in the catalytic mechanism. N-linked (GlcNAc...) asparagine glycosylation occurs at Asn413.

This sequence belongs to the glycosyl hydrolase 6 (cellulase B) family.

The protein resides in the secreted. The catalysed reaction is Hydrolysis of (1-&gt;4)-beta-D-glucosidic linkages in cellulose and cellotetraose, releasing cellobiose from the non-reducing ends of the chains.. Its function is as follows. The biological conversion of cellulose to glucose generally requires three types of hydrolytic enzymes: (1) Endoglucanases which cut internal beta-1,4-glucosidic bonds; (2) Exocellobiohydrolases that cut the disaccharide cellobiose from the non-reducing end of the cellulose polymer chain; (3) Beta-1,4-glucosidases which hydrolyze the cellobiose and other short cello-oligosaccharides to glucose. In Aspergillus fumigatus (strain CBS 144.89 / FGSC A1163 / CEA10) (Neosartorya fumigata), this protein is Probable 1,4-beta-D-glucan cellobiohydrolase C (cbhC).